Consider the following 85-residue polypeptide: MSILKETKRFMVVAMFIACVFISNNMNVAVANEIGYPGMGRGDRQPGCDHGNCPPDQPANPYHRGCEKSKRCRGPDPPALPRKMI.

The signal sequence occupies residues 1 to 31 (MSILKETKRFMVVAMFIACVFISNNMNVAVA). 2 disulfides stabilise this stretch: cysteine 48–cysteine 53 and cysteine 66–cysteine 72. The tract at residues 60 to 85 (NPYHRGCEKSKRCRGPDPPALPRKMI) is disordered. Residues 75 to 85 (PDPPALPRKMI) are compositionally biased toward pro residues.

The protein belongs to the plant rapid alkalinization factor (RALF) family.

It localises to the secreted. Cell signaling peptide that may regulate plant stress, growth, and development. Mediates a rapid alkalinization of extracellular space by mediating a transient increase in the cytoplasmic Ca(2+) concentration leading to a calcium-dependent signaling events through a cell surface receptor and a concomitant activation of some intracellular mitogen-activated protein kinases. The sequence is that of Protein RALF-like 28 (RALFL28) from Arabidopsis thaliana (Mouse-ear cress).